The sequence spans 49 residues: MGFGYGFGGGYGGGCYGGYAGGYGGGYGSTFVLLVVLFILLIIVGASFF.

A helical transmembrane segment spans residues 29–49 (STFVLLVVLFILLIIVGASFF).

It belongs to the SscA family.

The protein localises to the membrane. The sequence is that of Sporulation protein YjcZ (yjcZ) from Bacillus subtilis (strain 168).